Reading from the N-terminus, the 695-residue chain is Calcium-binding acidic-repeat protein (695 aa).

The or 23 signal peptide spans 1–20 (MSHLWCWLFLVLCLACLVLS). TSP type-3 repeat units follow at residues 24-38 (KDSD…DEIN), 47-56 (ADSDQDGLTD), 70-82 (KDTD…DGVE), 184-196 (GDSD…DGAE), 202-214 (KDSD…DEEE), and 248-260 (GDSD…DGAE). Residues 45-695 (YNADSDQDGL…TDPWRSDHSV (651 aa)) form a disordered region. The span at 59–70 (EVNRHQTHPQDK) shows a compositional bias: basic and acidic residues. 3 stretches are compositionally biased toward acidic residues: residues 271 to 283 (ADSD…DGEE), 291 to 306 (PEDP…DGDE), and 313 to 324 (DPEEDDSDEDGV). TSP type-3 repeat units follow at residues 294 to 308 (PDSD…DEVN), 317 to 329 (DDSD…DGAE), 340 to 352 (EDSD…DGAE), 363 to 375 (EDSD…DGAE), 379 to 393 (TDSD…DEVA), 402 to 414 (ADSD…DGAE), 425 to 437 (KDTD…DGVE), 470 to 482 (EDTD…DGAE), 493 to 505 (ADTD…DGAE), 516 to 528 (ADSD…DGAE), 539 to 551 (GDSD…DAAE), 555 to 569 (KDSD…DEVR), 600 to 609 (RDTDGDGVAD), 623 to 635 (ADTD…DGAE), and 646 to 658 (ADSD…DGAE). Acidic residues-rich tracts occupy residues 361–370 (NDEDSDDDGI) and 381–392 (SDGDGLPDEDEV). Composition is skewed to acidic residues over residues 467–477 (PNDEDTDDDGL) and 491–500 (EDADTDDDGL). Over residues 537-546 (NDGDSDDDGV) the composition is skewed to acidic residues. Residues 589 to 603 (EILKHKTDPRNRDTD) are compositionally biased toward basic and acidic residues. Residues 665-679 (NAKDGDSDDDGKADG) are compositionally biased toward basic and acidic residues.

Its subcellular location is the secreted. The protein resides in the endoplasmic reticulum. Its function is as follows. May function as a calcium-binding protein. This Euglena gracilis protein is Calcium-binding acidic-repeat protein.